A 772-amino-acid chain; its full sequence is Potassium transporter 24 (772 aa).

Residues 1 to 23 are Cytoplasmic-facing; that stretch reads MDVEGGGAAARRKGGWWWWREEA. Residues 24-44 traverse the membrane as a helical segment; the sequence is VLAYQSLGVVYGEVAAAPLYV. Over 45–66 the chain is Extracellular; that stretch reads YRSAFAGGDIEHSAGNEEIYGA. Residues 67–87 form a helical membrane-spanning segment; that stretch reads LSLVFWTLTLVPLAKYVLLVL. The Cytoplasmic segment spans residues 88 to 150; it reads RADDAGEGGT…ALERHRVLQR (63 aa). Residues 151–171 traverse the membrane as a helical segment; that stretch reads LLLLLALLGTCMVIGDGVLTP. Over 172-192 the chain is Extracellular; that stretch reads AVSVFSAVSGLELSMDKDQHK. The chain crosses the membrane as a helical span at residues 193 to 213; sequence YILLPITCVILVCLFALQHYG. The Cytoplasmic portion of the chain corresponds to 214–216; sequence THR. The helical transmembrane segment at 217–237 threads the bilayer; the sequence is VGFLFAPIVCLWLLCISIIGV. Residues 238–265 lie on the Extracellular side of the membrane; the sequence is YNIIHWNPHVYQALSPYYMYKFLRKTQT. The chain crosses the membrane as a helical span at residues 266–286; sequence GGWMSLGGILLCVTGSEAMYA. Over 287–298 the chain is Cytoplasmic; the sequence is DLGHFTQNSIKM. The chain crosses the membrane as a helical span at residues 299–319; that stretch reads AFTLLVYPALVLAYMGQAAYI. Topologically, residues 320–344 are extracellular; the sequence is SRHHNFEDGSHIGFYVSVPEKIRWP. Residues 345-365 form a helical membrane-spanning segment; it reads VLGIAILASVVGSQAIITGTF. Residues 366–392 are Cytoplasmic-facing; the sequence is SIIKQCSSLNCFPRVKIVHTSSTVHGQ. A helical membrane pass occupies residues 393 to 413; sequence IYIPEINWILMILCLSVTIGF. At 414 to 423 the chain is on the extracellular side; that stretch reads RDTKHLTNAQ. A helical membrane pass occupies residues 424-444; sequence GLAVITVMLVTTCLMSLVILL. At 445–449 the chain is on the cytoplasmic side; it reads CWNKS. The chain crosses the membrane as a helical span at residues 450-470; sequence IVYALSFLLFFGAIEVIYFAA. Residues 471–477 lie on the Extracellular side of the membrane; it reads SLVKFHE. A helical transmembrane segment spans residues 478 to 498; that stretch reads GAWVPVTLSFIFMMVMCVWHY. The Cytoplasmic portion of the chain corresponds to 499–772; sequence GTKKKYEFDV…TVEVGMICLV (274 aa). A disordered region spans residues 656-684; it reads EEGEFDGSDSTGSSAHKEINPNTTAPKPK.

This sequence belongs to the HAK/KUP transporter (TC 2.A.72.3) family.

It is found in the membrane. In terms of biological role, high-affinity potassium transporter. In Oryza sativa subsp. japonica (Rice), this protein is Potassium transporter 24 (HAK24).